A 240-amino-acid chain; its full sequence is Seed lectin (240 aa).

Asparagine 111 carries an N-linked (GlcNAc...) asparagine glycan. Residues glutamate 123 and aspartate 125 each coordinate Mn(2+). The Ca(2+) site is built by aspartate 125, asparagine 129, and aspartate 132. Mn(2+) contacts are provided by aspartate 132 and histidine 137. N-linked (GlcNAc...) asparagine glycosylation is present at asparagine 183.

It belongs to the leguminous lectin family. Homotetramer. Post-translationally, partially N-glycosylated at Asn-111 and Asn-183 with the heptasaccharide [(beta-xylosyl-1,2)(alpha-mannosyl-1,6)(alpha-mannosyl-1,3)]beta-manosyl-1,4-GlcNAC-beta-1,4-GlcNAc-beta-1,4 [alpha-fucosyl-1,3]GlcNAc. A small proportion of alpha chains are proteolytically cleaved at 114-115 into gamma and beta chains. This is probably dependent on the deglycosylation of Asn-111. In terms of tissue distribution, seed.

In terms of biological role, lectin that binds galactose. The polypeptide is Seed lectin (Vatairea macrocarpa).